A 340-amino-acid chain; its full sequence is MTNKNAYAQSGVDVEAGYEVVERIKKHVARTESAGVMGALGGFGGMFDLSKTGVKEPVLISGTDGVGTKLMLAIKYDKHDTIGQDCVAMCVNDIIAAGAEPLYFLDYVATGKNEPAKLEQVVAGVAEGCVQAGAALIGGETAEMPGMYGEDDYDLAGFAVGVAEKSQIIDGSKVVEGDVLLGLASSGIHSNGYSLVRRVFADYTGEEVLPELEGKKLKEVLLEPTRIYVKAVLPLIKEELVNGIAHITGGGFIENVPRMFADDLAAEIDESKVPVLPIFKALEKYGQIKHEEMFEIFNMGVGLMLAVSPENVERVKELLDEAVYEIGRIVKKENESVIIK.

The protein belongs to the AIR synthase family.

Its subcellular location is the cytoplasm. The catalysed reaction is 2-formamido-N(1)-(5-O-phospho-beta-D-ribosyl)acetamidine + ATP = 5-amino-1-(5-phospho-beta-D-ribosyl)imidazole + ADP + phosphate + H(+). Its pathway is purine metabolism; IMP biosynthesis via de novo pathway; 5-amino-1-(5-phospho-D-ribosyl)imidazole from N(2)-formyl-N(1)-(5-phospho-D-ribosyl)glycinamide: step 2/2. This Streptococcus pneumoniae (strain P1031) protein is Phosphoribosylformylglycinamidine cyclo-ligase.